The sequence spans 500 residues: Probable cytosol aminopeptidase (500 aa).

Residues Lys264 and Asp269 each coordinate Mn(2+). Lys276 is a catalytic residue. The Mn(2+) site is built by Asp287, Asp346, and Glu348. Residue Arg350 is part of the active site.

This sequence belongs to the peptidase M17 family. The cofactor is Mn(2+).

The protein resides in the cytoplasm. It carries out the reaction Release of an N-terminal amino acid, Xaa-|-Yaa-, in which Xaa is preferably Leu, but may be other amino acids including Pro although not Arg or Lys, and Yaa may be Pro. Amino acid amides and methyl esters are also readily hydrolyzed, but rates on arylamides are exceedingly low.. It catalyses the reaction Release of an N-terminal amino acid, preferentially leucine, but not glutamic or aspartic acids.. In terms of biological role, presumably involved in the processing and regular turnover of intracellular proteins. Catalyzes the removal of unsubstituted N-terminal amino acids from various peptides. In Chlamydia abortus (strain DSM 27085 / S26/3) (Chlamydophila abortus), this protein is Probable cytosol aminopeptidase.